We begin with the raw amino-acid sequence, 153 residues long: UPF0178 protein CC_1215 (153 aa).

The protein belongs to the UPF0178 family.

This chain is UPF0178 protein CC_1215, found in Caulobacter vibrioides (strain ATCC 19089 / CIP 103742 / CB 15) (Caulobacter crescentus).